The following is a 277-amino-acid chain: Ribosomal RNA small subunit methyltransferase A (277 aa).

Asn-23, Leu-25, Gly-50, Glu-75, Asp-98, and Asn-121 together coordinate S-adenosyl-L-methionine.

It belongs to the class I-like SAM-binding methyltransferase superfamily. rRNA adenine N(6)-methyltransferase family. RsmA subfamily.

It is found in the cytoplasm. The catalysed reaction is adenosine(1518)/adenosine(1519) in 16S rRNA + 4 S-adenosyl-L-methionine = N(6)-dimethyladenosine(1518)/N(6)-dimethyladenosine(1519) in 16S rRNA + 4 S-adenosyl-L-homocysteine + 4 H(+). Functionally, specifically dimethylates two adjacent adenosines (A1518 and A1519) in the loop of a conserved hairpin near the 3'-end of 16S rRNA in the 30S particle. May play a critical role in biogenesis of 30S subunits. The polypeptide is Ribosomal RNA small subunit methyltransferase A (Paraburkholderia xenovorans (strain LB400)).